We begin with the raw amino-acid sequence, 452 residues long: Chromosomal replication initiator protein DnaA (452 aa).

Positions 1 to 85 (MSTTAWQKCL…IEVGSKPVEA (85 aa)) are domain I, interacts with DnaA modulators. The domain II stretch occupies residues 85-115 (AVDTPAETIVTSSSTAPLKSAPKKAVDYKSS). The tract at residues 116–332 (HLNKKFVFDS…GALRRVIANA (217 aa)) is domain III, AAA+ region. Positions 160, 162, 163, and 164 each coordinate ATP. Residues 333 to 452 (HFTGKPITIE…YKNLMRILSS (120 aa)) are domain IV, binds dsDNA.

This sequence belongs to the DnaA family. As to quaternary structure, oligomerizes as a right-handed, spiral filament on DNA at oriC.

Its subcellular location is the cytoplasm. Its function is as follows. Plays an essential role in the initiation and regulation of chromosomal replication. ATP-DnaA binds to the origin of replication (oriC) to initiate formation of the DNA replication initiation complex once per cell cycle. Binds the DnaA box (a 9 base pair repeat at the origin) and separates the double-stranded (ds)DNA. Forms a right-handed helical filament on oriC DNA; dsDNA binds to the exterior of the filament while single-stranded (ss)DNA is stabiized in the filament's interior. The ATP-DnaA-oriC complex binds and stabilizes one strand of the AT-rich DNA unwinding element (DUE), permitting loading of DNA polymerase. After initiation quickly degrades to an ADP-DnaA complex that is not apt for DNA replication. Binds acidic phospholipids. The chain is Chromosomal replication initiator protein DnaA from Legionella pneumophila (strain Paris).